We begin with the raw amino-acid sequence, 684 residues long: Acetophenone carboxylase delta subunit (684 aa).

It belongs to the oxoprolinase family. Acetophenone carboxylase consists of five subunits; a heterooctameric subcomplex of two alpha (Apc1), two beta (Apc2), two gamma (Apc3) and two delta (Apc4) subunits assembles with the epsilon (Apc5) subunit in an unknown stoichiometry. Mg(2+) serves as cofactor. The cofactor is Mn(2+).

The protein localises to the cytoplasm. It catalyses the reaction acetophenone + hydrogencarbonate + 2 ATP + H2O = 3-oxo-3-phenylpropanoate + 2 ADP + 2 phosphate + 2 H(+). With respect to regulation, inhibited by zinc ions, carbamoylphosphate and beta,gamma-imido-ATP. In terms of biological role, catalyzes the carboxylation of acetophenone to form 3-oxo-3-phenylpropanoate (benzoylacetate) in the anaerobic catabolism of ethylbenzene. Also carboxylates propiophenone at the same rate and 4-acetyl-pyridine at lower rates. This is Acetophenone carboxylase delta subunit (apc4) from Aromatoleum aromaticum (strain DSM 19018 / LMG 30748 / EbN1) (Azoarcus sp. (strain EbN1)).